We begin with the raw amino-acid sequence, 191 residues long: RNA polymerase sigma factor CnrH (191 aa).

Residues 49–62 (DVVQDTFVAAWHAL) carry the Polymerase core binding motif. Residues 156 to 175 (QPEAAAVLGLSVKAVEGRIG) constitute a DNA-binding region (H-T-H motif).

The protein belongs to the sigma-70 factor family. ECF subfamily.

Sigma factors are initiation factors that promote the attachment of RNA polymerase to specific initiation sites and are then released. This sigma factor regulates the genes for a membrane-located efflux system that confers resistance to nickel and cobalt. Functionally, cnrH alone is able to activate CNR expression, while both CnrY and CrnX are needed for nickel induction of cnrH. Binds DNA in an RNA polymerase-dependent fashion. CnrH may be controlled by a CnrYX transmembrane anti-sigma factor complex which binds CnrH in the absence of Ni(2+). If Ni(2+) appears in the periplasm, it may be bound by CnrR (CnrX); the signal then would be transmitted by CnrY into the cytoplasm and CnrH would be released. The protein is RNA polymerase sigma factor CnrH (cnrH) of Cupriavidus metallidurans (strain ATCC 43123 / DSM 2839 / NBRC 102507 / CH34) (Ralstonia metallidurans).